Consider the following 351-residue polypeptide: GDSL esterase/lipase At3g14820 (351 aa).

A signal peptide spans 1-22 (MDLHLIGFLLWFFVVQVTTSSA). The N-linked (GlcNAc...) asparagine glycan is linked to Asn-25. Ser-39 serves as the catalytic Nucleophile. Active-site residues include Asp-325 and His-328.

It belongs to the 'GDSL' lipolytic enzyme family.

The protein resides in the secreted. The protein is GDSL esterase/lipase At3g14820 of Arabidopsis thaliana (Mouse-ear cress).